The following is a 418-amino-acid chain: MTTPLTAFGHDPWWLVLGKALAIFVFLMLNVLVAILLERKILGWMQLRPGPNRVGPWGVLQSLADGIKLALKETITPGGVDKFVYFAAPVISTIPAFTAFAFIPFGPVVSVFGHRTPLQLTDLPVAVLFILGLSAIGVYGIVLGGWASGSTYPLLGGVRSTAQVISYEVAMGLSFAAVFLYAGSMSTSQIVAAQDRVWFVFLLLPSFVIYLISMVGETNRAPFDLPEAEGELVAGFHTEYSSLKFAMFMLAEYVNMMTVSSLATALFFGGWHAPWPLNMWAGANTGWWPVLWFTAKMWTFLFIYFWLRASLPRLRYDQFMGLGWKLLIPASLVWVLIAAVIRTLQNQGYAHWTPILVISSIVFAAALVLSLRKPFTTPHIRALRRAAAPPGQAAAHRAGFHPGIPDTAAAGESAGGRE.

Helical transmembrane passes span 15–35 (LVLG…LVAI), 83–103 (FVYF…FAFI), 123–143 (LPVA…GIVL), 164–184 (VISY…YAGS), 197–217 (VWFV…MVGE), 262–282 (LATA…MWAG), 287–307 (WWPV…YFWL), 321–341 (GLGW…AAVI), and 349–369 (YAHW…ALVL). The tract at residues 394 to 418 (AAHRAGFHPGIPDTAAAGESAGGRE) is disordered.

The protein belongs to the complex I subunit 1 family. As to quaternary structure, NDH-1 is composed of 14 different subunits. Subunits NuoA, H, J, K, L, M, N constitute the membrane sector of the complex.

It localises to the cell membrane. The enzyme catalyses a quinone + NADH + 5 H(+)(in) = a quinol + NAD(+) + 4 H(+)(out). Its function is as follows. NDH-1 shuttles electrons from NADH, via FMN and iron-sulfur (Fe-S) centers, to quinones in the respiratory chain. The immediate electron acceptor for the enzyme in this species is believed to be menaquinone. Couples the redox reaction to proton translocation (for every two electrons transferred, four hydrogen ions are translocated across the cytoplasmic membrane), and thus conserves the redox energy in a proton gradient. This subunit may bind ubiquinone. This is NADH-quinone oxidoreductase subunit H from Mycobacterium avium (strain 104).